The chain runs to 366 residues: Apolipoprotein A-V (366 aa).

The signal sequence occupies residues 1 to 23 (MASMAAVLTWALALLSAFSATQA). Coiled coils occupy residues 54–157 (ATLK…VGED) and 236–262 (TLKA…RAFA). Phosphothreonine; by FAM20C is present on T55. Residue S59 is modified to Phosphoserine.

The protein belongs to the apolipoprotein A1/A4/E family. As to quaternary structure, interacts with GPIHBP1. Interacts with SORL1; this interaction leads to APOA5 internalization and sorting either to lysosomes and degradation, or to the trans-Golgi network. Post-translationally, phosphorylated by FAM20C in the extracellular medium. In terms of tissue distribution, liver and plasma.

It is found in the secreted. It localises to the early endosome. The protein resides in the late endosome. Its subcellular location is the golgi apparatus. The protein localises to the trans-Golgi network. Functionally, minor apolipoprotein mainly associated with HDL and to a lesser extent with VLDL. May also be associated with chylomicrons. Important determinant of plasma triglyceride (TG) levels by both being a potent stimulator of apo-CII lipoprotein lipase (LPL) TG hydrolysis and an inhibitor of the hepatic VLDL-TG production rate (without affecting the VLDL-apoB production rate). Activates poorly lecithin:cholesterol acyltransferase (LCAT) and does not enhance efflux of cholesterol from macrophages. Binds heparin. The polypeptide is Apolipoprotein A-V (APOA5) (Homo sapiens (Human)).